The sequence spans 267 residues: MGRSPCCEKAHTNKGAWTKEEDDRLTAYIKAHGEGCWRSLPKAAGLLRCGKSCRLRWINYLRPDLKRGNFSHEEDELIIKLHSLLGNKWSLIAGRLPGRTDNEIKNYWNTHIRRKLTSRGIDPVTHRAINSDHAASNITISFESAQRDDKGAVFRRDAEPAKAAAAAAAISHHVDHHHRSNPQLDWGQGKPLKCPDLNLDLCISPPIHEDPMVDTKPVVKREAGVGVGVVGLCFSCSMGLPRSSDCKCSSFMGLRTAMLDFRSIEMK.

HTH myb-type domains are found at residues 9 to 61 and 62 to 116; these read KAHT…INYL and RPDL…RRKL. DNA-binding regions (H-T-H motif) lie at residues 37-61 and 89-112; these read WRSL…INYL and WSLI…NTHI.

Germinating seed and apical meristem of shoot and root.

It localises to the nucleus. Functionally, possible transcription activator in response to an external signal. May be involved in the regulation of flavonoid biosynthesis. The protein is Myb-related protein Hv1 (MYB1) of Hordeum vulgare (Barley).